Consider the following 217-residue polypeptide: Protein-L-isoaspartate O-methyltransferase (217 aa).

The active site involves S64.

Belongs to the methyltransferase superfamily. L-isoaspartyl/D-aspartyl protein methyltransferase family.

It is found in the cytoplasm. It carries out the reaction [protein]-L-isoaspartate + S-adenosyl-L-methionine = [protein]-L-isoaspartate alpha-methyl ester + S-adenosyl-L-homocysteine. Its function is as follows. Catalyzes the methyl esterification of L-isoaspartyl residues in peptides and proteins that result from spontaneous decomposition of normal L-aspartyl and L-asparaginyl residues. It plays a role in the repair and/or degradation of damaged proteins. In Azorhizobium caulinodans (strain ATCC 43989 / DSM 5975 / JCM 20966 / LMG 6465 / NBRC 14845 / NCIMB 13405 / ORS 571), this protein is Protein-L-isoaspartate O-methyltransferase.